The chain runs to 98 residues: UPF0251 protein SO_0727 (98 aa).

It belongs to the UPF0251 family.

The polypeptide is UPF0251 protein SO_0727 (Shewanella oneidensis (strain ATCC 700550 / JCM 31522 / CIP 106686 / LMG 19005 / NCIMB 14063 / MR-1)).